Consider the following 193-residue polypeptide: Regulator of free ubiquitin chains 1 (193 aa).

Belongs to the RFU1 family.

It localises to the endosome. Functionally, inhibitor of the DOA4 deubiquitinase involved in the regulation of protein degradation by the proteasome and maintenance of a normal level of free ubiquitin. The chain is Regulator of free ubiquitin chains 1 (RFU1) from Eremothecium gossypii (strain ATCC 10895 / CBS 109.51 / FGSC 9923 / NRRL Y-1056) (Yeast).